The sequence spans 317 residues: Methionyl-tRNA formyltransferase (317 aa).

S112 to P115 lines the (6S)-5,6,7,8-tetrahydrofolate pocket.

The protein belongs to the Fmt family.

The enzyme catalyses L-methionyl-tRNA(fMet) + (6R)-10-formyltetrahydrofolate = N-formyl-L-methionyl-tRNA(fMet) + (6S)-5,6,7,8-tetrahydrofolate + H(+). Functionally, attaches a formyl group to the free amino group of methionyl-tRNA(fMet). The formyl group appears to play a dual role in the initiator identity of N-formylmethionyl-tRNA by promoting its recognition by IF2 and preventing the misappropriation of this tRNA by the elongation apparatus. This Actinobacillus succinogenes (strain ATCC 55618 / DSM 22257 / CCUG 43843 / 130Z) protein is Methionyl-tRNA formyltransferase.